A 266-amino-acid chain; its full sequence is Dolichol-phosphate mannosyltransferase subunit 1 (266 aa).

Residues 1-19 are compositionally biased toward low complexity; it reads MASPGASRGASAATAAAAS. Residues 1 to 31 form a disordered region; the sequence is MASPGASRGASAATAAAASPRPPQGRSSRRD. Ala-2 carries the post-translational modification N-acetylalanine. Ser-3 is subject to Phosphoserine. The GDP-alpha-D-mannose site is built by Pro-38, Tyr-40, Glu-42, Ile-69, Asp-71, Asp-124, Ala-125, Asp-126, Arg-153, Arg-240, and Lys-246. Asp-126 is a binding site for Mg(2+). Asp-126 serves as a coordination point for Mn(2+).

It belongs to the glycosyltransferase 2 family. As to quaternary structure, component of the dolichol-phosphate mannose (DPM) synthase complex composed of DPM1, DPM2 and DPM3; within the complex, directly interacts with DPM3. This interaction may stabilize DPM1. It depends on Mg(2+) as a cofactor. The cofactor is Mn(2+). Ca(2+) serves as cofactor.

The protein localises to the endoplasmic reticulum. The enzyme catalyses a di-trans,poly-cis-dolichyl phosphate + GDP-alpha-D-mannose = a di-trans,poly-cis-dolichyl beta-D-mannosyl phosphate + GDP. Its pathway is protein modification; protein glycosylation. Its function is as follows. Transfers mannose from GDP-mannose to dolichol monophosphate to form dolichol phosphate mannose (Dol-P-Man) which is the mannosyl donor in pathways leading to N-glycosylation, glycosyl phosphatidylinositol membrane anchoring, and O-mannosylation of proteins; catalytic subunit of the dolichol-phosphate mannose (DPM) synthase complex. The polypeptide is Dolichol-phosphate mannosyltransferase subunit 1 (DPM1) (Cricetulus griseus (Chinese hamster)).